A 378-amino-acid chain; its full sequence is Ribosomal RNA large subunit methyltransferase G (378 aa).

It belongs to the methyltransferase superfamily. RlmG family.

It localises to the cytoplasm. It carries out the reaction guanosine(1835) in 23S rRNA + S-adenosyl-L-methionine = N(2)-methylguanosine(1835) in 23S rRNA + S-adenosyl-L-homocysteine + H(+). Specifically methylates the guanine in position 1835 (m2G1835) of 23S rRNA. This chain is Ribosomal RNA large subunit methyltransferase G, found in Salmonella paratyphi B (strain ATCC BAA-1250 / SPB7).